A 234-amino-acid chain; its full sequence is Arsenate respiratory reductase iron-sulfur subunit ArrB (234 aa).

4Fe-4S ferredoxin-type domains are found at residues 3–32 (LGMVIDLQKCVGCGGCSLACKTENNTNDGI), 48–79 (VKYTYIPTLCNHCDDAPCVKVCPTGAMHKDKR), and 80–109 (GLTLQNNDECIGCKKCMNACPYGVISFNAA). [4Fe-4S] cluster-binding residues include Cys-12, Cys-15, Cys-18, Cys-22, Cys-57, Cys-60, Cys-65, Cys-69, Cys-89, Cys-92, Cys-95, Cys-99, Cys-164, Cys-167, Cys-179, and Cys-183.

Heterodimer composed of one large subunit (ArrA) and one small subunit (ArrB). Requires [4Fe-4S] cluster as cofactor.

The protein localises to the periplasm. With respect to regulation, phosphate is a competitive inhibitor. Functionally, component of the arsenate respiratory reductase (Arr) complex, which catalyzes the reduction of arsenate (As(V)) to arsenite (As(III)). ArrB is probably the electron transfer subunit. The periplasmic localization of this complex may allow the cell to couple arsenate reduction to energy production before arsenate can be transported to the cell cytoplasm and enter the ars detoxification pathway, an energy-requiring process. The chain is Arsenate respiratory reductase iron-sulfur subunit ArrB from Shewanella sp. (strain ANA-3).